The chain runs to 159 residues: 2-C-methyl-D-erythritol 2,4-cyclodiphosphate synthase (159 aa).

A divalent metal cation contacts are provided by Asp-8 and His-10. 4-CDP-2-C-methyl-D-erythritol 2-phosphate contacts are provided by residues 8–10 and 34–35; these read DVH and HS. Residue His-42 coordinates a divalent metal cation. 4-CDP-2-C-methyl-D-erythritol 2-phosphate-binding positions include 56-58, 61-65, 100-106, 132-135, Phe-139, and Arg-142; these read DIG, FPDTD, AQAPKML, and TTTE.

The protein belongs to the IspF family. Homotrimer. A divalent metal cation serves as cofactor.

The catalysed reaction is 4-CDP-2-C-methyl-D-erythritol 2-phosphate = 2-C-methyl-D-erythritol 2,4-cyclic diphosphate + CMP. It functions in the pathway isoprenoid biosynthesis; isopentenyl diphosphate biosynthesis via DXP pathway; isopentenyl diphosphate from 1-deoxy-D-xylulose 5-phosphate: step 4/6. Its function is as follows. Involved in the biosynthesis of isopentenyl diphosphate (IPP) and dimethylallyl diphosphate (DMAPP), two major building blocks of isoprenoid compounds. Catalyzes the conversion of 4-diphosphocytidyl-2-C-methyl-D-erythritol 2-phosphate (CDP-ME2P) to 2-C-methyl-D-erythritol 2,4-cyclodiphosphate (ME-CPP) with a corresponding release of cytidine 5-monophosphate (CMP). This is 2-C-methyl-D-erythritol 2,4-cyclodiphosphate synthase from Salmonella arizonae (strain ATCC BAA-731 / CDC346-86 / RSK2980).